The chain runs to 405 residues: Scramblase ANY1 (405 aa).

Over 1–51 the chain is Cytoplasmic; the sequence is MSTTGPLDATLIRDVAVATATKASYDMSDTLYSYLPKVDQFYIPEWLTMQF. Residues 52–72 traverse the membrane as a helical segment; sequence IANNLISFTPLFSYGTTIISI. Residues 73 to 76 are Lumenal-facing; sequence EKCK. A helical membrane pass occupies residues 77-97; it reads TALGFSIDICATMLIASILRI. Residues 98–103 are Cytoplasmic-facing; that stretch reads SYYLIT. The helical transmembrane segment at 104-124 threads the bilayer; sequence PYEITLLRQSLVMIFIQLILL. Topologically, residues 125–177 are lumenal; it reads RTSLKYRPDEYKYQNLTDVESLSHLIHDIWFEFFSCINRPKFLSEDWKNLIKS. The helical transmembrane segment at 178–198 threads the bilayer; the sequence is LSFTNLLKFSFKIFLAFFYKI. Topologically, residues 199 to 223 are cytoplasmic; sequence LKFFDPNFKRIGAFWQWDDDKNFWR. A helical transmembrane segment spans residues 224-244; sequence FLALFATVQILVTFFISNILN. Residues 245–254 lie on the Lumenal side of the membrane; sequence WDSLAQGLGS. The 58-residue stretch at 252–309 folds into the PQ-loop domain; that stretch reads LGSIIGSLGLLVESLLPLPQIAILYKLKSVQGFKLILLVSWLCGDTLKITYLIFGAKN. The chain crosses the membrane as a helical span at residues 255–275; it reads IIGSLGLLVESLLPLPQIAIL. The Cytoplasmic segment spans residues 276–283; that stretch reads YKLKSVQG. A helical membrane pass occupies residues 284–306; the sequence is FKLILLVSWLCGDTLKITYLIFG. Residues 307 to 312 are Lumenal-facing; the sequence is AKNISA. A helical membrane pass occupies residues 313–335; that stretch reads LFVIFALFQMSLDFYIGGQYIYY. Topologically, residues 336–405 are cytoplasmic; sequence RYYYPKLRHQ…GKSQAQAVTL (70 aa). Residues 379–405 are disordered; that stretch reads LKQDSNDTSDSPQDDQVGKSQAQAVTL. Residues 396–405 show a composition bias toward polar residues; the sequence is GKSQAQAVTL.

Interacts with NEO1.

Its subcellular location is the golgi apparatus membrane. The protein localises to the late endosome membrane. Its function is as follows. Phospholipid scramblase that transports phosphatidylserine (PS) and phosphatidylethalonamine (PE) bidirectionally from one leaflet to the other of the phospholipid bilayer to at least partially collapse the membrane asymmetry established by NEO1 and other flippases. The PS scramblase activity has been disputed. Functions in the trafficking pathway from endosomes to the trans-Golgi network (TGN). The sequence is that of Scramblase ANY1 from Saccharomyces cerevisiae (strain ATCC 204508 / S288c) (Baker's yeast).